A 343-amino-acid chain; its full sequence is Phosphate acyltransferase (343 aa).

This sequence belongs to the PlsX family. In terms of assembly, homodimer. Probably interacts with PlsY.

The protein localises to the cytoplasm. It catalyses the reaction a fatty acyl-[ACP] + phosphate = an acyl phosphate + holo-[ACP]. It participates in lipid metabolism; phospholipid metabolism. Its function is as follows. Catalyzes the reversible formation of acyl-phosphate (acyl-PO(4)) from acyl-[acyl-carrier-protein] (acyl-ACP). This enzyme utilizes acyl-ACP as fatty acyl donor, but not acyl-CoA. This is Phosphate acyltransferase from Halorhodospira halophila (strain DSM 244 / SL1) (Ectothiorhodospira halophila (strain DSM 244 / SL1)).